A 110-amino-acid polypeptide reads, in one-letter code: Auxin-responsive protein SAUR71 (110 aa).

It belongs to the ARG7 family. As to expression, highly expressed in the steles of roots and hypocotyls.

It is found in the cytoplasm. Plays a role in the regulation of cell expansion, root meristem patterning and auxin transport. The protein is Auxin-responsive protein SAUR71 of Arabidopsis thaliana (Mouse-ear cress).